We begin with the raw amino-acid sequence, 569 residues long: Adenine deaminase (569 aa).

It belongs to the metallo-dependent hydrolases superfamily. Adenine deaminase family. Mn(2+) serves as cofactor.

The catalysed reaction is adenine + H2O + H(+) = hypoxanthine + NH4(+). In Desulfitobacterium hafniense (strain Y51), this protein is Adenine deaminase.